Consider the following 245-residue polypeptide: tRNA pseudouridine synthase A (245 aa).

Asp-52 functions as the Nucleophile in the catalytic mechanism. A substrate-binding site is contributed by Tyr-111.

This sequence belongs to the tRNA pseudouridine synthase TruA family. In terms of assembly, homodimer.

The enzyme catalyses uridine(38/39/40) in tRNA = pseudouridine(38/39/40) in tRNA. Its function is as follows. Formation of pseudouridine at positions 38, 39 and 40 in the anticodon stem and loop of transfer RNAs. In Rickettsia africae (strain ESF-5), this protein is tRNA pseudouridine synthase A.